The following is a 462-amino-acid chain: Glycoprotein endo-alpha-1,2-mannosidase (462 aa).

Residues 1-9 lie on the Cytoplasmic side of the membrane; sequence MAKFRRRTC. The chain crosses the membrane as a helical; Signal-anchor for type II membrane protein span at residues 10–30; it reads ILLSLFILFIFSLMMGLKMLW. Over 31–462 the chain is Lumenal; it reads PNAASFGPPF…YALDQQQPAS (432 aa). The segment at 60–462 is catalytic; that stretch reads DFQRSDRINM…YALDQQQPAS (403 aa).

Belongs to the glycosyl hydrolase 99 family. Undergoes proteolytic cleavage in the C-terminal region.

The protein localises to the golgi apparatus membrane. The catalysed reaction is N-{alpha-Glc-(1-&gt;3)-alpha-Man-(1-&gt;2)-alpha-Man-(1-&gt;2)-alpha-Man-(1-&gt;3)-[alpha-Man-(1-&gt;2)-alpha-Man-(1-&gt;3)-[alpha-Man-(1-&gt;2)-alpha-Man-(1-&gt;6)]-alpha-Man-(1-&gt;6)]-beta-Man-(1-&gt;4)-beta-GlcNAc-(1-&gt;4)-beta-GlcNAc}-L-asparaginyl-[protein] + H2O = alpha-D-glucosyl-(1-&gt;3)-D-mannopyranose + N(4)-{alpha-D-Man-(1-&gt;2)-alpha-D-Man-(1-&gt;3)-[alpha-D-Man-(1-&gt;2)-alpha-D-Man-(1-&gt;3)-[alpha-D-Man-(1-&gt;2)-alpha-D-Man-(1-&gt;6)]-alpha-D-Man-(1-&gt;6)]-beta-D-Man-(1-&gt;4)-beta-D-GlaNAc-(1-&gt;4)-beta-D-GlcNAc}-L-asparaginyl-[protein] (N-glucan mannose isomer 8A1,2,3B1,2). The chain is Glycoprotein endo-alpha-1,2-mannosidase (Manea) from Mus musculus (Mouse).